Reading from the N-terminus, the 149-residue chain is Aspartate 1-decarboxylase (149 aa).

Ser-25 serves as the catalytic Schiff-base intermediate with substrate; via pyruvic acid. Position 25 is a pyruvic acid (Ser) (Ser-25). Substrate is bound at residue Thr-57. Tyr-58 (proton donor) is an active-site residue. 73–75 (GAA) provides a ligand contact to substrate. Residues 119–149 (GDPAAALPGDPSSLRGDVLDPAGARGLGGGA) are disordered.

Belongs to the PanD family. In terms of assembly, heterooctamer of four alpha and four beta subunits. It depends on pyruvate as a cofactor. In terms of processing, is synthesized initially as an inactive proenzyme, which is activated by self-cleavage at a specific serine bond to produce a beta-subunit with a hydroxyl group at its C-terminus and an alpha-subunit with a pyruvoyl group at its N-terminus.

It is found in the cytoplasm. It catalyses the reaction L-aspartate + H(+) = beta-alanine + CO2. It functions in the pathway cofactor biosynthesis; (R)-pantothenate biosynthesis; beta-alanine from L-aspartate: step 1/1. Its function is as follows. Catalyzes the pyruvoyl-dependent decarboxylation of aspartate to produce beta-alanine. This is Aspartate 1-decarboxylase from Parafrankia sp. (strain EAN1pec).